We begin with the raw amino-acid sequence, 596 residues long: MKTLTFFGPKYGTQVSLLSPNVVSKLSRFPLTSFARKPTKPVCVKTTDCDLVESQRTFNKFPRSDWGDHFLRLPFNVSDMDMLTIEMNALKSTIRKMLMYSQDVEETKERILIIYLLVALGMAYHFEDEIDDNLKHGFENIETTMAGENDLSTVSVMFWVFRTYGYNLSSDMFRRFKGEDGKFEECHTKDVKGLLSLYEAAQLGTSTEDILDEAMSFSSSHLECLAGGTCPPHISRLIQNELYMPQHHNAEILFASEYISFYKQEDVHNKVLLEFAKLNFKFLQLHWIHELKILTKWWNDQDLLSKLPPYFRDRMVECHLYAVIYYFEPQYSFGRIMLAKLLVLLTVVDDTCDRYGSVPEVAKLLDCVERWDPELGESLPDYLKTVFKFTLDVFEDCERAGKSEEGLSFNVDGALAEWAAAEKVPTVEEYLEVGGVAVTMYATIALGLLGLGPKAREHGYEWLKSRPKLVHDLATKGRLMNDMGGFKDDIGRGFLANVVNYYMKEYGTTEEETYKEFHKIVRDLEKSVNSEFLKINKGVPREILSRALNCGKMIDVTYRSGDGYTRPRGKFTEYVESLFVEHMDAPVMQYASSSTL.

Asp-349, Asp-353, Asn-481, and Asp-489 together coordinate Mg(2+). The DDXXD motif signature appears at 349 to 353; it reads DDTCD.

It belongs to the terpene synthase family. Tpsa subfamily. Requires Mg(2+) as cofactor. The cofactor is Mn(2+).

Its subcellular location is the cytoplasm. It participates in secondary metabolite biosynthesis; terpenoid biosynthesis. This Arabidopsis thaliana (Mouse-ear cress) protein is Putative terpenoid synthase 5 (TPS05).